The sequence spans 191 residues: Ribosomal RNA small subunit methyltransferase G (191 aa).

Residues glycine 62, phenylalanine 67, 111 to 112 (IE), and arginine 124 each bind S-adenosyl-L-methionine.

The protein belongs to the methyltransferase superfamily. RNA methyltransferase RsmG family.

It localises to the cytoplasm. The catalysed reaction is guanosine(527) in 16S rRNA + S-adenosyl-L-methionine = N(7)-methylguanosine(527) in 16S rRNA + S-adenosyl-L-homocysteine. In terms of biological role, specifically methylates the N7 position of guanine in position 527 of 16S rRNA. This is Ribosomal RNA small subunit methyltransferase G from Rickettsia prowazekii (strain Madrid E).